Consider the following 420-residue polypeptide: ATP phosphoribosyltransferase regulatory subunit (420 aa).

This sequence belongs to the class-II aminoacyl-tRNA synthetase family. HisZ subfamily. In terms of assembly, heteromultimer composed of HisG and HisZ subunits.

Its subcellular location is the cytoplasm. It functions in the pathway amino-acid biosynthesis; L-histidine biosynthesis; L-histidine from 5-phospho-alpha-D-ribose 1-diphosphate: step 1/9. In terms of biological role, required for the first step of histidine biosynthesis. May allow the feedback regulation of ATP phosphoribosyltransferase activity by histidine. The polypeptide is ATP phosphoribosyltransferase regulatory subunit (Bacillus thuringiensis subsp. konkukian (strain 97-27)).